A 312-amino-acid chain; its full sequence is tRNA-cytidine(32) 2-sulfurtransferase (312 aa).

The PP-loop motif motif lies at 47–52 (SGGKDS). [4Fe-4S] cluster contacts are provided by C122, C125, and C213.

Belongs to the TtcA family. As to quaternary structure, homodimer. Mg(2+) is required as a cofactor. Requires [4Fe-4S] cluster as cofactor.

It is found in the cytoplasm. The catalysed reaction is cytidine(32) in tRNA + S-sulfanyl-L-cysteinyl-[cysteine desulfurase] + AH2 + ATP = 2-thiocytidine(32) in tRNA + L-cysteinyl-[cysteine desulfurase] + A + AMP + diphosphate + H(+). The protein operates within tRNA modification. Catalyzes the ATP-dependent 2-thiolation of cytidine in position 32 of tRNA, to form 2-thiocytidine (s(2)C32). The sulfur atoms are provided by the cysteine/cysteine desulfurase (IscS) system. In Shewanella frigidimarina (strain NCIMB 400), this protein is tRNA-cytidine(32) 2-sulfurtransferase.